The sequence spans 89 residues: Small ribosomal subunit protein uS15 (89 aa).

The protein belongs to the universal ribosomal protein uS15 family. Part of the 30S ribosomal subunit. Forms a bridge to the 50S subunit in the 70S ribosome, contacting the 23S rRNA.

Its function is as follows. One of the primary rRNA binding proteins, it binds directly to 16S rRNA where it helps nucleate assembly of the platform of the 30S subunit by binding and bridging several RNA helices of the 16S rRNA. In terms of biological role, forms an intersubunit bridge (bridge B4) with the 23S rRNA of the 50S subunit in the ribosome. The polypeptide is Small ribosomal subunit protein uS15 (Ectopseudomonas mendocina (strain ymp) (Pseudomonas mendocina)).